The primary structure comprises 399 residues: MFSILLRLSLVTKIFIAIILGFVVAFLFPNMTPYFSIFGEIFIKALKAVAPILVFVLVISSIANFNVEQSAKNFKPILFLYIVSMLFAAFSAVIADLLFPTTLVLASSADQAFQPPGSLNDVLKNLILSFVSNPVVALSEANFIGILAWAIILGTAFRHSTQATKTVLQDCADAIGKVIHLVISFAPIGIFGLVAVTFAHSGIETLKSYSHLLLVLLGTMFFMALIVNPIMVACVIKKNPYPLVFKCLRESGITAFFTRSSAANIPVNLDLARRCGVDESTSNVIIPLGSTVNMCGAAITITVLTLATVNTLGISVDIWTMLILCVVASISACGASGVAGGSLLLVPVACSLFGISSDIAMQVVAIGMVISVLQDSTETALNSSTDVLFVIAVDQASKT.

9 consecutive transmembrane segments (helical) span residues 8–28 (LSLV…AFLF), 37–57 (IFGE…VFVL), 77–97 (ILFL…IADL), 134–154 (PVVA…IILG), 178–198 (VIHL…AVTF), 212–232 (LLLV…PIMV), 284–304 (VIIP…ITVL), 312–332 (LGIS…SISA), and 348–370 (VACS…GMVI).

This sequence belongs to the dicarboxylate/amino acid:cation symporter (DAACS) (TC 2.A.23) family.

The protein resides in the cell inner membrane. It catalyses the reaction L-serine(in) + Na(+)(in) = L-serine(out) + Na(+)(out). It carries out the reaction L-threonine(in) + Na(+)(in) = L-threonine(out) + Na(+)(out). In terms of biological role, involved in the import of serine and threonine into the cell, with the concomitant import of sodium (symport system). The polypeptide is Serine/threonine transporter SstT (Acinetobacter baylyi (strain ATCC 33305 / BD413 / ADP1)).